We begin with the raw amino-acid sequence, 30 residues long: Ranatuerin-2OK (30 aa).

The cysteines at positions 23 and 30 are disulfide-linked.

In terms of tissue distribution, expressed by the skin glands.

It is found in the secreted. In terms of biological role, antimicrobial peptide. Active against Gram-negative bacterium E.coli (MIC=12.5 uM) and against Gram-positive bacterium S.aureus (MIC=50 uM). The protein is Ranatuerin-2OK of Nidirana okinavana (Kampira Falls frog).